The chain runs to 557 residues: Pectinesterase/pectinesterase inhibitor 18 (557 aa).

The first 34 residues, 1–34 (MSNSNQPLLSKPKSLKHKNLCLVLSFVAILGSVA), serve as a signal peptide directing secretion. The segment at 47 to 203 (NNDDSLLTTS…VSRARVALAI (157 aa)) is pectinesterase inhibitor 18. Residues 246–543 (NVVVAKDGTG…FTVAKLIQGG (298 aa)) form a pectinesterase 18 region. Substrate-binding residues include threonine 321 and glutamine 351. The active-site Proton donor; for pectinesterase activity is the aspartate 374. Aspartate 395 acts as the Nucleophile; for pectinesterase activity in catalysis. Substrate contacts are provided by arginine 463 and tryptophan 465.

In the N-terminal section; belongs to the PMEI family. This sequence in the C-terminal section; belongs to the pectinesterase family. As to expression, expressed in siliques, flowers, floral stems, rosette leaves and roots.

Its subcellular location is the secreted. The protein resides in the cell wall. It carries out the reaction [(1-&gt;4)-alpha-D-galacturonosyl methyl ester](n) + n H2O = [(1-&gt;4)-alpha-D-galacturonosyl](n) + n methanol + n H(+). The enzyme catalyses Endohydrolysis of the N-glycosidic bond at one specific adenosine on the 28S rRNA.. Its pathway is glycan metabolism; pectin degradation; 2-dehydro-3-deoxy-D-gluconate from pectin: step 1/5. Functionally, acts in the modification of cell walls via demethylesterification of cell wall pectin. Inhibits the elongation phase of protein synthesis. The protein is Pectinesterase/pectinesterase inhibitor 18 (PME18) of Arabidopsis thaliana (Mouse-ear cress).